A 167-amino-acid polypeptide reads, in one-letter code: MFPMVTEFMNYGQQTIRAARYIGQGFMITLSHANRLPVTIQYPYEKLITSERFRGRIHFEFDKCIACEVCVRVCPIDLPVVDWKLETDIRKKRLLNYSIDFGICIFCGNCVEYCPTNCLSMTEEYELSTYNRHELNYNQIALGRLPVSIIDDYTIRTISSSPQIKNG.

4Fe-4S ferredoxin-type domains follow at residues 55 to 84 (GRIHFEFDKCIACEVCVRVCPIDLPVVDWK) and 95 to 124 (LNYSIDFGICIFCGNCVEYCPTNCLSMTEE). [4Fe-4S] cluster contacts are provided by cysteine 64, cysteine 67, cysteine 70, cysteine 74, cysteine 104, cysteine 107, cysteine 110, and cysteine 114.

It belongs to the complex I 23 kDa subunit family. In terms of assembly, NDH is composed of at least 16 different subunits, 5 of which are encoded in the nucleus. [4Fe-4S] cluster serves as cofactor.

The protein localises to the plastid. Its subcellular location is the chloroplast thylakoid membrane. It catalyses the reaction a plastoquinone + NADH + (n+1) H(+)(in) = a plastoquinol + NAD(+) + n H(+)(out). The enzyme catalyses a plastoquinone + NADPH + (n+1) H(+)(in) = a plastoquinol + NADP(+) + n H(+)(out). Its function is as follows. NDH shuttles electrons from NAD(P)H:plastoquinone, via FMN and iron-sulfur (Fe-S) centers, to quinones in the photosynthetic chain and possibly in a chloroplast respiratory chain. The immediate electron acceptor for the enzyme in this species is believed to be plastoquinone. Couples the redox reaction to proton translocation, and thus conserves the redox energy in a proton gradient. This chain is NAD(P)H-quinone oxidoreductase subunit I, chloroplastic, found in Jasminum nudiflorum (Winter jasmine).